A 616-amino-acid chain; its full sequence is Chaperone protein HtpG (616 aa).

Residues 1–333 (MKKQFDTEVN…CQDLPLNVSR (333 aa)) are a; substrate-binding. The interval 334 to 542 (EILQQNKILS…SNDPTYQMQK (209 aa)) is b. The interval 543–616 (IMLSMGQEVK…INEFLEKDLL (74 aa)) is c.

The protein belongs to the heat shock protein 90 family. Homodimer.

It localises to the cytoplasm. Functionally, molecular chaperone. Has ATPase activity. This is Chaperone protein HtpG from Borreliella afzelii (strain PKo) (Borrelia afzelii).